A 328-amino-acid chain; its full sequence is DNA-directed RNA polymerase subunit alpha (328 aa).

An alpha N-terminal domain (alpha-NTD) region spans residues methionine 1–glutamate 230. Positions proline 257–lysine 328 are alpha C-terminal domain (alpha-CTD).

Belongs to the RNA polymerase alpha chain family. In terms of assembly, homodimer. The RNAP catalytic core consists of 2 alpha, 1 beta, 1 beta' and 1 omega subunit. When a sigma factor is associated with the core the holoenzyme is formed, which can initiate transcription.

The enzyme catalyses RNA(n) + a ribonucleoside 5'-triphosphate = RNA(n+1) + diphosphate. Its function is as follows. DNA-dependent RNA polymerase catalyzes the transcription of DNA into RNA using the four ribonucleoside triphosphates as substrates. The sequence is that of DNA-directed RNA polymerase subunit alpha from Fervidobacterium nodosum (strain ATCC 35602 / DSM 5306 / Rt17-B1).